The sequence spans 452 residues: Gamma conglutin 1 (452 aa).

Positions 1 to 33 (MAKNMAPILHILVISLSYSFLFVTSSSQNSQSL) are cleaved as a signal peptide. Positions 61–432 (HWGNILKRTP…DLARSRVGFN (372 aa)) constitute a Peptidase A1 domain. 5 cysteine pairs are disulfide-bonded: cysteine 89-cysteine 179, cysteine 103-cysteine 116, cysteine 108-cysteine 134, cysteine 119-cysteine 129, and cysteine 353-cysteine 394. Asparagine 131 carries N-linked (GlcNAc...) asparagine glycosylation.

Belongs to the peptidase A1 family. Two-subunit monomeric unit made of alpha and beta subunits coupled by disulfide bonds (at pH 4.5 and under non-reducing conditions). Monomeric alpha and beta subunits in reducing conditions. Can also form oligomers including dimer, tetramer and cyclic hexamer (trimer of dimers) (at pH &gt; 5.5). Component of globulins complexes which accumulate in seeds. Interacts with flavonoids (e.g. apigenin glucosides) present in globulins complexes. Glycosylated on alpha chain at Asn-131; identified N-glycans bound are Man(2)(Xyl)(Fuc)GlcNAc(2), Man(3)(Xyl)(Fuc)GlcNAc(2), GlcNAcMan(3)(Xyl)(Fuc)GlcNAc(2) and GlcNAc(2)Man(3)(Xyl)(Fuc)GlcNAc(2). In terms of tissue distribution, expressed in developing seeds and in the young roots and cotyledons of germinating seeds and young seedlings.

The protein localises to the secreted. It localises to the extracellular space. In terms of biological role, sulfur-rich seed storage protein that remains undegraded at germination. The uncleaved form exhibits some inhibitory activity against GH11 xylanase from T.longibrachiatum, more at pH 7 than at pH 5.3, but not against GH12 xyloglucan-specific endoglucanase (XEG) from A.aculeatus. Binds to model phospholipid membranes containing dimyristoyl phosphatidylglycerol (DMPG), dioleoyl phosphatidic acid (DOPA) or mixture of dimyristoyl phosphatidylcholine and dimyristoyl phosphatidylglycerol (DMPC:DMPG), or mixture of dioleoyl phosphatidic acid and dioleoyl phosphatidylcholine (DOPC:DOPA). The sequence is that of Gamma conglutin 1 from Lupinus albus (White lupine).